A 510-amino-acid polypeptide reads, in one-letter code: Nectin-4 (510 aa).

The first 31 residues, 1-31 (MPLSLGAEMWGPEAWLLLLLLLASFTGRCPA), serve as a signal peptide directing secretion. In terms of domain architecture, Ig-like V-type spans 32–144 (GELETSDVVT…GSFQARLRLR (113 aa)). The Extracellular segment spans residues 32–349 (GELETSDVVT…GKQVDLVSAS (318 aa)). Intrachain disulfides connect Cys52–Cys127, Cys171–Cys223, and Cys270–Cys315. Ig-like C2-type domains follow at residues 148 to 237 (PPLP…QRIT) and 248 to 331 (ASVR…VTVD). An N-linked (GlcNAc...) asparagine glycan is attached at Asn281. The helical transmembrane segment at 350–370 (VVVVGVIAALLFCLLVVVVVL) threads the bilayer. The Cytoplasmic portion of the chain corresponds to 371-510 (MSRYHRRKAQ…IYINGRGHLV (140 aa)). A compositionally biased stretch (basic and acidic residues) spans 399 to 412 (RRLHSHHTDPRSQP). Disordered stretches follow at residues 399–447 (RRLH…SYST) and 457–476 (QTEL…DQDE).

The protein belongs to the nectin family. In terms of assembly, self-associates. Interacts via its Ig-like V-type domain with NECTIN1 Ig-like V-type domain. Interacts via its C-terminus with AFDN. As to quaternary structure, (Microbial infection) Interacts (via N-terminus) with measles virus hemagglutinin protein. Post-translationally, the soluble form is produced by proteolytic cleavage at the cell surface (shedding), probably by ADAM17/TACE. Predominantly expressed in placenta. Not detected in normal breast epithelium but expressed in breast carcinoma.

It is found in the cell membrane. Its subcellular location is the cell junction. The protein localises to the adherens junction. The protein resides in the secreted. In terms of biological role, seems to be involved in cell adhesion through trans-homophilic and -heterophilic interactions, the latter including specifically interactions with NECTIN1. Does not act as receptor for alpha-herpesvirus entry into cells. Its function is as follows. (Microbial infection) Acts as a receptor for measles virus. This is Nectin-4 from Homo sapiens (Human).